The following is a 275-amino-acid chain: Non-heme chloroperoxidase CPO-A1 (275 aa).

An AB hydrolase-1 domain is found at 22-255 (PVVFIHGWPL…KVYEGSSHGI (234 aa)). Catalysis depends on charge relay system residues Ser95, Asp224, and His253.

This sequence belongs to the AB hydrolase superfamily. Bacterial non-heme haloperoxidase / perhydrolase family. As to quaternary structure, homodimer.

Its activity is regulated as follows. Brominating activity not inhibited by azide, peroxidase activity stimulated by bromide. In terms of biological role, may be a chlorinating enzyme involved in 7-chlorotetracycline biosynthesis. Able to brominate as well. The polypeptide is Non-heme chloroperoxidase CPO-A1 (bpoA1) (Kitasatospora aureofaciens (Streptomyces aureofaciens)).